Consider the following 679-residue polypeptide: MSKNLLIELGLEELPAYVVTPSEKQLGERLATFLTENRLSFEDIQTFSTPRRLAVRVSGLADQQTDLTEDFKGPAKKIALDADGNFSKAAQGFVRGKGLTTDAIEFREVKGEEYVYVTKHEAGKPAKEVLLGVTEVLSAMTFPVSMHWANNSFEYIRPVHTLTVLLNDEALELDFLDIHSGRVSRGHRFLGTETTITSADSYEADLRSQFVIADAKERQEMIVEQIKAIEAAQGVQVDIDADLLNEVLNLVEFPTAFMGSFDAKYLDVPEEVLVTSMKNHQRYFVVRDQEGHLMPNFVSVRNGNDQAIENVIKGNEKVLVARLEDGEFFWREDQKLQIADLVAKLTNVTFHEKIGSLAEHMDRTRVIAASLAKEANLSAEEVTAVDRAAQIYKFDLLTGMVGEFDELQGIMGEKYARLAGEDAAVATAIREHYLPDAAGGALPETKVGAVLALADKLDTLLSFFSVGLIPSGSNDPYALRRATQGIVRILDHFGWRIPMDKLVDSLYDLSFDSLTYANKADVMNFIRARVDKMMGKAVPKDIREAVLESSTFVVPEMLAAAEALVKASHTENYKPAVESLSRAFNLAEKADASVQVDPSLFENEQENTLFAAIQGLTLAGSAAQQLEQVFALSPVINDFFDNTMVMAEDQALKNNRLAILSDLVSKAKAIAAFNQLNTK.

Belongs to the class-II aminoacyl-tRNA synthetase family. As to quaternary structure, tetramer of two alpha and two beta subunits.

The protein localises to the cytoplasm. The catalysed reaction is tRNA(Gly) + glycine + ATP = glycyl-tRNA(Gly) + AMP + diphosphate. This Streptococcus pyogenes serotype M4 (strain MGAS10750) protein is Glycine--tRNA ligase beta subunit.